The following is a 267-amino-acid chain: Undecaprenyl-diphosphatase (267 aa).

8 consecutive transmembrane segments (helical) span residues 1-21 (MTYF…FLPI), 39-59 (QGLA…VIYF), 83-103 (SNLA…GLLF), 111-131 (LRSA…LWWV), 149-169 (ALFL…RSGI), 189-209 (FLMS…KLAM), 218-238 (LLST…HFFL), and 246-266 (MMPF…WLAL).

Belongs to the UppP family.

Its subcellular location is the cell inner membrane. The enzyme catalyses di-trans,octa-cis-undecaprenyl diphosphate + H2O = di-trans,octa-cis-undecaprenyl phosphate + phosphate + H(+). In terms of biological role, catalyzes the dephosphorylation of undecaprenyl diphosphate (UPP). Confers resistance to bacitracin. The polypeptide is Undecaprenyl-diphosphatase (Aliivibrio fischeri (strain ATCC 700601 / ES114) (Vibrio fischeri)).